We begin with the raw amino-acid sequence, 319 residues long: Tetrahydromethanopterin S-methyltransferase subunit H (319 aa).

The protein belongs to the MtrH family. In terms of assembly, the complex is composed of 8 subunits; MtrA, MtrB, MtrC, MtrD, MtrE, MtrF, MtrG and MtrH.

The catalysed reaction is 5-methyl-5,6,7,8-tetrahydromethanopterin + coenzyme M + 2 Na(+)(in) = 5,6,7,8-tetrahydromethanopterin + methyl-coenzyme M + 2 Na(+)(out). It participates in one-carbon metabolism; methanogenesis from CO(2); methyl-coenzyme M from 5,10-methylene-5,6,7,8-tetrahydromethanopterin: step 2/2. In terms of biological role, part of a complex that catalyzes the formation of methyl-coenzyme M and tetrahydromethanopterin from coenzyme M and methyl-tetrahydromethanopterin. This is an energy-conserving, sodium-ion translocating step. MtrH catalyzes the transfer of the methyl group from methyl-tetrahydromethanopterin to the corrinoid prosthetic group of MtrA. In Methanococcus maripaludis (strain C5 / ATCC BAA-1333), this protein is Tetrahydromethanopterin S-methyltransferase subunit H.